The chain runs to 426 residues: Ornithine aminotransferase (426 aa).

K291 bears the N6-(pyridoxal phosphate)lysine mark.

It belongs to the class-III pyridoxal-phosphate-dependent aminotransferase family. The cofactor is pyridoxal 5'-phosphate.

It carries out the reaction a 2-oxocarboxylate + L-ornithine = L-glutamate 5-semialdehyde + an L-alpha-amino acid. It participates in amino-acid biosynthesis; L-proline biosynthesis; L-glutamate 5-semialdehyde from L-ornithine: step 1/1. This chain is Ornithine aminotransferase, found in Vigna aconitifolia (Moth bean).